Consider the following 368-residue polypeptide: Propane 2-monooxygenase, hydroxylase component small subunit (368 aa).

It belongs to the TmoE/XamoE family. In terms of assembly, the propane 2-monooxygenase multicomponent enzyme system is composed of an electron transfer component and a monooxygenase component interacting with the effector protein MimD. The electron transfer component is composed of a reductase (MimB), and the monooxygenase component is formed by a large subunit (MimA) and a small subunit (MimC). Requires the presence of the chaperonin-like protein MimG to ensure a productive folding, resulting of a soluble MimC, which leads to the active form of MimABCD.

It catalyses the reaction propane + NADH + O2 + H(+) = propan-2-ol + NAD(+) + H2O. The enzyme catalyses acetone + NADH + O2 + H(+) = hydroxyacetone + NAD(+) + H2O. The catalysed reaction is butan-2-one + NADH + O2 + H(+) = 1-hydroxy-2-butanone + NAD(+) + H2O. It carries out the reaction phenol + NADH + O2 + H(+) = hydroquinone + NAD(+) + H2O. Its function is as follows. Component of the propane 2-monooxygenase multicomponent enzyme system which is involved in the degradation of propane via the O2-dependent hydroxylation of propane. Also involved in the degradation of acetone via the O2-dependent hydroxylation of acetone. Also able to catalyze the oxidation of phenol, methylethylketone (2-butanone), 1-propanol and 2-propanol. The sequence is that of Propane 2-monooxygenase, hydroxylase component small subunit from Mycolicibacterium goodii (Mycobacterium goodii).